The chain runs to 186 residues: MRCPYCGGLDTQVKDSRPSDDASAIRRRRICPDCGGRFTTFERVQLRDLTVVKRSGRRVPFDRDKLQRSIDVALRKRPVEADRVERLVSGIARQLESGGEAEVSSEAIGELVMEGLKALDDVAYVRFASVYKNFREARDFEELLGRLNGAGRPGGEPEPPDEAAPGPAAAPGEGGEAPARRARSRA.

The interval 1–24 (MRCPYCGGLDTQVKDSRPSDDASA) is disordered. Residues 3-34 (CPYCGGLDTQVKDSRPSDDASAIRRRRICPDC) fold into a zinc finger. Residues 12-24 (QVKDSRPSDDASA) are compositionally biased toward basic and acidic residues. In terms of domain architecture, ATP-cone spans 49 to 139 (LTVVKRSGRR…VYKNFREARD (91 aa)). The disordered stretch occupies residues 146 to 186 (RLNGAGRPGGEPEPPDEAAPGPAAAPGEGGEAPARRARSRA).

It belongs to the NrdR family. Zn(2+) serves as cofactor.

Negatively regulates transcription of bacterial ribonucleotide reductase nrd genes and operons by binding to NrdR-boxes. The protein is Transcriptional repressor NrdR of Methylobacterium sp. (strain 4-46).